A 347-amino-acid polypeptide reads, in one-letter code: Holliday junction branch migration complex subunit RuvB (347 aa).

Residues 4 to 185 (TDRLITPAPL…FGIISRLEFY (182 aa)) are large ATPase domain (RuvB-L). Residues Leu24, Arg25, Gly66, Lys69, Thr70, Thr71, 132–134 (EDY), Arg175, Tyr185, and Arg222 contribute to the ATP site. Thr70 provides a ligand contact to Mg(2+). The segment at 186 to 256 (SVEELTQIVM…VADAALLMLD (71 aa)) is small ATPAse domain (RuvB-S). The interval 259-347 (AIGLDVMDRK…LSADLWDEKQ (89 aa)) is head domain (RuvB-H). 3 residues coordinate DNA: Arg295, Arg314, and Arg319.

This sequence belongs to the RuvB family. In terms of assembly, homohexamer. Forms an RuvA(8)-RuvB(12)-Holliday junction (HJ) complex. HJ DNA is sandwiched between 2 RuvA tetramers; dsDNA enters through RuvA and exits via RuvB. An RuvB hexamer assembles on each DNA strand where it exits the tetramer. Each RuvB hexamer is contacted by two RuvA subunits (via domain III) on 2 adjacent RuvB subunits; this complex drives branch migration. In the full resolvosome a probable DNA-RuvA(4)-RuvB(12)-RuvC(2) complex forms which resolves the HJ.

It localises to the cytoplasm. It carries out the reaction ATP + H2O = ADP + phosphate + H(+). In terms of biological role, the RuvA-RuvB-RuvC complex processes Holliday junction (HJ) DNA during genetic recombination and DNA repair, while the RuvA-RuvB complex plays an important role in the rescue of blocked DNA replication forks via replication fork reversal (RFR). RuvA specifically binds to HJ cruciform DNA, conferring on it an open structure. The RuvB hexamer acts as an ATP-dependent pump, pulling dsDNA into and through the RuvAB complex. RuvB forms 2 homohexamers on either side of HJ DNA bound by 1 or 2 RuvA tetramers; 4 subunits per hexamer contact DNA at a time. Coordinated motions by a converter formed by DNA-disengaged RuvB subunits stimulates ATP hydrolysis and nucleotide exchange. Immobilization of the converter enables RuvB to convert the ATP-contained energy into a lever motion, pulling 2 nucleotides of DNA out of the RuvA tetramer per ATP hydrolyzed, thus driving DNA branch migration. The RuvB motors rotate together with the DNA substrate, which together with the progressing nucleotide cycle form the mechanistic basis for DNA recombination by continuous HJ branch migration. Branch migration allows RuvC to scan DNA until it finds its consensus sequence, where it cleaves and resolves cruciform DNA. The chain is Holliday junction branch migration complex subunit RuvB from Nitrosospira multiformis (strain ATCC 25196 / NCIMB 11849 / C 71).